We begin with the raw amino-acid sequence, 350 residues long: Secreted effector protein PipB2 (350 aa).

Pentapeptide repeat domains lie at 162 to 201, 202 to 241, 247 to 286, and 287 to 326; these read ANLTAENLCDADLSGADLEGAILFMADCDGANFKGANLSG, ASLGDSNLTNACLEDSIMCGATLDRANLTGANLQHTSLLG, CNCSGANMDHANVSGSTLIRADMSGATLKGATIMAAIMEG, and AVLTRANLQKASFTATNLDGADLSEANLRNTSFKDCTLTD.

Interacts with the host kinesin light chain (KLC), a subunit of the kinesin-1 motor complex.

The protein localises to the secreted. It is found in the host membrane. Its function is as follows. Effector proteins function to alter host cell physiology and promote bacterial survival in host tissues. Involved in the reorganization of late endosome/lysosome (LE/Lys) compartments in mammalian cells. Necessary and sufficient to link kinesin-1 onto the Salmonella-containing vacuole (SCV) membrane. Required for centrifugal extension of lysosomal glycoprotein-rich membrane tubules, known as Salmonella-induced filaments (Sifs), away from the SCV and toward the cell periphery. Required for virulence, but not for intracellular survival and replication in phagocytic cells. The sequence is that of Secreted effector protein PipB2 (pipB2) from Salmonella typhi.